Consider the following 77-residue polypeptide: UPF0291 protein YnzC (77 aa).

The disordered stretch occupies residues 56–77 (DPEGNDVTPEKLKREQRNNKLH). Residues 63–77 (TPEKLKREQRNNKLH) show a composition bias toward basic and acidic residues.

The protein belongs to the UPF0291 family.

It localises to the cytoplasm. The protein is UPF0291 protein YnzC (ynzC) of Bacillus subtilis (strain 168).